Here is a 563-residue protein sequence, read N- to C-terminus: (R)-mandelonitrile lyase 2 (563 aa).

A signal peptide spans Met1–Ser27. FAD is bound by residues Thr63–Ser64, Glu82–Arg83, Val129, Thr133, and Asn137–Val140. 2 N-linked (GlcNAc...) asparagine glycosylation sites follow: Asn145 and Asn162. Val244 serves as a coordination point for FAD. Cys355 is a binding site for substrate. 2 N-linked (GlcNAc...) asparagine glycosylation sites follow: Asn379 and Asn419. The cysteines at positions 426 and 477 are disulfide-linked. A substrate-binding site is contributed by Tyr484. FAD is bound by residues Trp485–His486 and Gly514. The Proton donor role is filled by His486. His524 serves as the catalytic Proton acceptor. Residue Pro525 to Gln526 participates in FAD binding.

Belongs to the GMC oxidoreductase family. In terms of assembly, monomer. It depends on FAD as a cofactor. Post-translationally, glycosylated. Deglycosylation does not affect the enzymatic activity.

The enzyme catalyses (R)-mandelonitrile = benzaldehyde + hydrogen cyanide. In terms of biological role, involved in cyanogenesis, the release of HCN from injured tissues. Catalyzes the stereospecific addition of HCN to a variety of aldehydes in vitro. Has no oxidase activity. The redox properties of the FAD cofactor appear to be unimportant for catalysis. In Prunus dulcis (Almond), this protein is (R)-mandelonitrile lyase 2 (MDL2).